Consider the following 1034-residue polypeptide: Ice nucleation protein InaU (1034 aa).

Residues 162-993 are octapeptide periodicity; the sequence is ATYGSTLSGT…LTAGENSVLI (832 aa). Disordered regions lie at residues 260–287, 311–342, 356–383, 407–438, 452–480, and 570–597; these read YGSTQTAGEDSSLTAGYGSTQTAQKGSD, TQTAGEESTQTAGYGSTQTAQKGSDLTAGYGS, YGSTQTAGEDSSLTAGYGSTQTAQKGSDL, and AREGSDLTAGYGSTQTAQENSDLTTGYG. Polar residues-rich tracts occupy residues 261-286, 311-334, 357-382, 407-430, 453-480, and 580-592; these read GSTQTAGEDSSLTAGYGSTQTAQKGS, TQTAGEESTQTAGYGSTQTAQKGS, GSTQTAGEDSSLTAGYGSTQTAQKGSDL, and YGSTQTAQENSDL.

The protein belongs to the bacterial ice nucleation protein family.

The protein localises to the cell outer membrane. In terms of biological role, ice nucleation proteins enable bacteria to nucleate crystallization in supercooled water. This is Ice nucleation protein InaU (inaU) from Pantoea ananas (Erwinia uredovora).